We begin with the raw amino-acid sequence, 509 residues long: Maturase K (509 aa).

It belongs to the intron maturase 2 family. MatK subfamily.

It is found in the plastid. It localises to the chloroplast. Its function is as follows. Usually encoded in the trnK tRNA gene intron. Probably assists in splicing its own and other chloroplast group II introns. The protein is Maturase K of Eucommia ulmoides (Hardy rubber tree).